The following is a 686-amino-acid chain: Delta-like protein 4 (686 aa).

Positions 1 to 26 (MTPASRSACRWALLLLAVLWPQQRAA) are cleaved as a signal peptide. The Extracellular portion of the chain corresponds to 27 to 532 (GSGIFQLRLQ…GLPPSFPWVA (506 aa)). Intrachain disulfides connect cysteine 51-cysteine 55 and cysteine 62-cysteine 75. N-linked (GlcNAc...) asparagine glycosylation is found at asparagine 79, asparagine 109, and asparagine 162. One can recognise a DSL domain in the interval 174-218 (VICSDNYYGESCSRLCKKRDDHFGHYECQPDGSLSCLPGWTGKYC). Cysteine 176 and cysteine 185 are joined by a disulfide. Interaction with Notch1 stretches follow at residues 186-188 (SRL) and 192-196 (RDDHF). 26 disulfide bridges follow: cysteine 189/cysteine 201, cysteine 209/cysteine 218, cysteine 223/cysteine 234, cysteine 227/cysteine 240, cysteine 242/cysteine 251, cysteine 254/cysteine 265, cysteine 260/cysteine 271, cysteine 273/cysteine 282, cysteine 289/cysteine 301, cysteine 295/cysteine 311, cysteine 313/cysteine 322, cysteine 329/cysteine 340, cysteine 334/cysteine 349, cysteine 351/cysteine 360, cysteine 367/cysteine 378, cysteine 372/cysteine 389, cysteine 391/cysteine 400, cysteine 407/cysteine 418, cysteine 412/cysteine 427, cysteine 429/cysteine 438, cysteine 445/cysteine 456, cysteine 450/cysteine 465, cysteine 467/cysteine 476, cysteine 485/cysteine 496, cysteine 490/cysteine 507, and cysteine 509/cysteine 518. 8 EGF-like domains span residues 219 to 252 (DQPI…RLCN), 253 to 283 (ECIP…LFCD), 285 to 323 (DLNY…EHCE), 325 to 361 (GLSK…QHCE), 364 to 401 (TLTC…SNCE), 403 to 439 (KVDR…THCE), 441 to 477 (HISD…RRCE), and 481 to 519 (THDA…SRCE). N-linked (GlcNAc...) asparagine glycosylation is present at asparagine 297. The N-linked (GlcNAc...) asparagine glycan is linked to asparagine 394. Residues 533-553 (VSLGVGLVVLLVLLVMVVVAV) traverse the membrane as a helical segment. Residues 554-686 (RQLRLRRPDD…RNECVIATEV (133 aa)) lie on the Cytoplasmic side of the membrane.

As to quaternary structure, interacts with NOTCH4. Interacts (via N-terminal DSL and MNNL domains) with NOTCH1 (via EGF-like domains). Expressed in vascular endothelium. Expressed in retina at least during embryogenesis.

Its subcellular location is the cell membrane. In terms of biological role, involved in the Notch signaling pathway as Notch ligand. Activates NOTCH1 and NOTCH4. Involved in angiogenesis; negatively regulates endothelial cell proliferation and migration and angiogenic sprouting. Essential for retinal progenitor proliferation. Required for suppressing rod fates in late retinal progenitors as well as for proper generation of other retinal cell types. During spinal cord neurogenesis, inhibits V2a interneuron fate. This is Delta-like protein 4 (Dll4) from Mus musculus (Mouse).